The chain runs to 175 residues: RNA pyrophosphohydrolase (175 aa).

Residues 8-159 (PYRTCVGMML…KRPVYERVVK (152 aa)) enclose the Nudix hydrolase domain. Residues 47 to 68 (GGVDPGEDPWTAAKRELYEETS) carry the Nudix box motif.

This sequence belongs to the Nudix hydrolase family. RppH subfamily. A divalent metal cation is required as a cofactor.

In terms of biological role, accelerates the degradation of transcripts by removing pyrophosphate from the 5'-end of triphosphorylated RNA, leading to a more labile monophosphorylated state that can stimulate subsequent ribonuclease cleavage. The polypeptide is RNA pyrophosphohydrolase (Rhodopseudomonas palustris (strain BisB18)).